The sequence spans 325 residues: Elongation factor P--(R)-beta-lysine ligase (325 aa).

76-78 is a binding site for substrate; that stretch reads SPE. Residues 100-102 and asparagine 109 each bind ATP; that span reads RNE. Tyrosine 118 lines the substrate pocket. Residue 244-245 coordinates ATP; the sequence is EL. Substrate is bound at residue glutamate 251. Glycine 300 contacts ATP.

It belongs to the class-II aminoacyl-tRNA synthetase family. EpmA subfamily. In terms of assembly, homodimer.

It catalyses the reaction D-beta-lysine + L-lysyl-[protein] + ATP = N(6)-((3R)-3,6-diaminohexanoyl)-L-lysyl-[protein] + AMP + diphosphate + H(+). Functionally, with EpmB is involved in the beta-lysylation step of the post-translational modification of translation elongation factor P (EF-P). Catalyzes the ATP-dependent activation of (R)-beta-lysine produced by EpmB, forming a lysyl-adenylate, from which the beta-lysyl moiety is then transferred to the epsilon-amino group of a conserved specific lysine residue in EF-P. The sequence is that of Elongation factor P--(R)-beta-lysine ligase from Pectobacterium atrosepticum (strain SCRI 1043 / ATCC BAA-672) (Erwinia carotovora subsp. atroseptica).